The sequence spans 133 residues: Acyl-CoA thioester hydrolase YciA (133 aa).

Residues 8-123 (PQGELVLRTL…LFIYVAVDPD (116 aa)) form the HotDog ACOT-type domain.

It belongs to the acyl coenzyme A hydrolase family.

Its function is as follows. Catalyzes the hydrolysis of the thioester bond in palmitoyl-CoA and malonyl-CoA. The sequence is that of Acyl-CoA thioester hydrolase YciA (yciA) from Salmonella typhi.